Here is a 601-residue protein sequence, read N- to C-terminus: Elongation factor 4 (601 aa).

The region spanning 5–187 is the tr-type G domain; that stretch reads ENIRNFCIIA…AIVHHLPAPK (183 aa). GTP contacts are provided by residues 17-22 and 134-137; these read DHGKST and NKID.

This sequence belongs to the TRAFAC class translation factor GTPase superfamily. Classic translation factor GTPase family. LepA subfamily.

The protein resides in the cell inner membrane. It catalyses the reaction GTP + H2O = GDP + phosphate + H(+). Its function is as follows. Required for accurate and efficient protein synthesis under certain stress conditions. May act as a fidelity factor of the translation reaction, by catalyzing a one-codon backward translocation of tRNAs on improperly translocated ribosomes. Back-translocation proceeds from a post-translocation (POST) complex to a pre-translocation (PRE) complex, thus giving elongation factor G a second chance to translocate the tRNAs correctly. Binds to ribosomes in a GTP-dependent manner. This chain is Elongation factor 4, found in Desulfovibrio desulfuricans (strain ATCC 27774 / DSM 6949 / MB).